The sequence spans 168 residues: Photosystem I assembly protein Ycf3 (168 aa).

3 TPR repeats span residues Ala35–Pro68, Ser72–Leu105, and Gly120–Asn153.

The protein belongs to the Ycf3 family.

It localises to the plastid membrane. Essential for the assembly of the photosystem I (PSI) complex. May act as a chaperone-like factor to guide the assembly of the PSI subunits. The sequence is that of Photosystem I assembly protein Ycf3 from Cuscuta gronovii (Common dodder).